A 302-amino-acid polypeptide reads, in one-letter code: S-adenosylmethionine sensor upstream of mTORC1 (302 aa).

3 residues coordinate S-adenosyl-L-homocysteine: R73, G132, and D150. Positions 73, 132, 150, 151, 162, 163, and 196 each coordinate S-adenosyl-L-methionine. S-adenosyl-L-homocysteine-binding residues include D162, F163, and S196.

Belongs to the BMT2/SAMTOR family.

Functionally, S-adenosyl-L-methionine-binding protein. It is unclear whether this protein acts as a sensor of S-adenosyl-L-methionine to signal methionine sufficiency to mTORC1. Probably acts as a S-adenosyl-L-methionine-dependent methyltransferase. The protein is S-adenosylmethionine sensor upstream of mTORC1 of Drosophila melanogaster (Fruit fly).